Here is a 250-residue protein sequence, read N- to C-terminus: Ribosomal RNA small subunit methyltransferase G (250 aa).

S-adenosyl-L-methionine contacts are provided by residues glycine 78, leucine 83, 129-130 (AE), and arginine 144. The disordered stretch occupies residues 224–250 (IAAPRKRGGQQRRAGHARGTSNRRRGT). Over residues 227 to 250 (PRKRGGQQRRAGHARGTSNRRRGT) the composition is skewed to basic residues.

Belongs to the methyltransferase superfamily. RNA methyltransferase RsmG family.

Its subcellular location is the cytoplasm. Specifically methylates the N7 position of guanine in position 518 of 16S rRNA. This is Ribosomal RNA small subunit methyltransferase G from Nocardioides sp. (strain ATCC BAA-499 / JS614).